Here is a 788-residue protein sequence, read N- to C-terminus: Integrin beta-6 (788 aa).

The signal sequence occupies residues 1–21 (MGIELLCLFFLCLGRNDHVQG). The 50-residue stretch at 22 to 71 (GCAVGGAETCEDCLLIGPQCAWCSQENFTHLSGVGERCDTPANLLAKGCQ) folds into the PSI domain. The Extracellular portion of the chain corresponds to 22–709 (GCAVGGAETC…KDCPKPPNIP (688 aa)). Cystine bridges form between C23–C41, C31–C454, C34–C59, C44–C70, C197–C204, C252–C293, C394–C406, C426–C452, C456–C476, C467–C479, C481–C490, C492–C519, C502–C517, C511–C522, C524–C537, C539–C560, C544–C558, C552–C563, and C565–C574. N-linked (GlcNAc...) asparagine glycosylation is found at N48 and N97. The region spanning 131 to 371 (YPVDLYYLMD…QLIISAYEEL (241 aa)) is the VWFA domain. Mg(2+) contacts are provided by D140, S142, and S144. Ca(2+)-binding residues include S144, D147, D148, and E179. The Ca(2+) site is built by N235, D237, P239, and E240. E240 lines the Mg(2+) pocket. An N-linked (GlcNAc...) asparagine glycan is attached at N260. Ca(2+)-binding residues include D271 and K355. N387 is a glycosylation site (N-linked (GlcNAc...) asparagine). N418 is a glycosylation site (N-linked (GlcNAc...) asparagine). I-EGF domains lie at 456-491 (CQKE…HHCE), 492-538 (CGED…PYCQ), 539-575 (CDNF…EYCN), and 576-615 (CTTS…PTCE). N-linked (GlcNAc...) asparagine glycans are attached at residues N463 and N471. A glycan (N-linked (GlcNAc...) asparagine) is linked at N541. N-linked (GlcNAc...) asparagine glycosylation occurs at N575. Cystine bridges form between C576-C599, C583-C597, C591-C602, C604-C614, C617-C620, C624-C670, C630-C649, C633-C645, and C678-C702. The helical transmembrane segment at 710–730 (MIMLGVSLAILLIGVVLLCIW) threads the bilayer. Residues 731–758 (KLLVSFHDRKEVAKFEAERSKAKWQTGT) form an interaction with HAX1 region. Residues 731–788 (KLLVSFHDRKEVAKFEAERSKAKWQTGTNPLYRGSTSTFKNVTYKHKEKQKVDLSTDG) lie on the Cytoplasmic side of the membrane.

This sequence belongs to the integrin beta chain family. In terms of assembly, heterodimer of an alpha and a beta subunit. Interacts with FLNB. Interacts with HAX1. ITGAV:ITGB6 interacts with FBN1. ITGAV:ITGB6 interacts with TGFB1.

The protein resides in the cell membrane. It is found in the cell junction. The protein localises to the focal adhesion. Functionally, integrin alpha-V:beta-6 (ITGAV:ITGB6) is a receptor for fibronectin and cytotactin. It recognizes the sequence R-G-D in its ligands. ITGAV:ITGB6 acts as a receptor for fibrillin-1 (FBN1) and mediates R-G-D-dependent cell adhesion to FBN1. Integrin alpha-V:beta-6 (ITGAV:ITGB6) mediates R-G-D-dependent release of transforming growth factor beta-1 (TGF-beta-1) from regulatory Latency-associated peptide (LAP), thereby playing a key role in TGF-beta-1 activation. The protein is Integrin beta-6 (ITGB6) of Bos taurus (Bovine).